A 502-amino-acid polypeptide reads, in one-letter code: Probable cytosol aminopeptidase (502 aa).

Mn(2+)-binding residues include lysine 270 and aspartate 275. The active site involves lysine 282. Positions 293, 352, and 354 each coordinate Mn(2+). Residue arginine 356 is part of the active site.

It belongs to the peptidase M17 family. Mn(2+) is required as a cofactor.

Its subcellular location is the cytoplasm. It catalyses the reaction Release of an N-terminal amino acid, Xaa-|-Yaa-, in which Xaa is preferably Leu, but may be other amino acids including Pro although not Arg or Lys, and Yaa may be Pro. Amino acid amides and methyl esters are also readily hydrolyzed, but rates on arylamides are exceedingly low.. The catalysed reaction is Release of an N-terminal amino acid, preferentially leucine, but not glutamic or aspartic acids.. Its function is as follows. Presumably involved in the processing and regular turnover of intracellular proteins. Catalyzes the removal of unsubstituted N-terminal amino acids from various peptides. In Buchnera aphidicola subsp. Schizaphis graminum (strain Sg), this protein is Probable cytosol aminopeptidase.